Consider the following 132-residue polypeptide: Small ribosomal subunit protein uS8 (132 aa).

The protein belongs to the universal ribosomal protein uS8 family. Part of the 30S ribosomal subunit. Contacts proteins S5 and S12.

Functionally, one of the primary rRNA binding proteins, it binds directly to 16S rRNA central domain where it helps coordinate assembly of the platform of the 30S subunit. This is Small ribosomal subunit protein uS8 from Lactobacillus delbrueckii subsp. bulgaricus (strain ATCC BAA-365 / Lb-18).